The chain runs to 308 residues: Ribosomal RNA small subunit methyltransferase H (308 aa).

S-adenosyl-L-methionine-binding positions include 35 to 37, D55, F79, D100, and Q107; that span reads GGH.

This sequence belongs to the methyltransferase superfamily. RsmH family.

Its subcellular location is the cytoplasm. It carries out the reaction cytidine(1402) in 16S rRNA + S-adenosyl-L-methionine = N(4)-methylcytidine(1402) in 16S rRNA + S-adenosyl-L-homocysteine + H(+). In terms of biological role, specifically methylates the N4 position of cytidine in position 1402 (C1402) of 16S rRNA. The polypeptide is Ribosomal RNA small subunit methyltransferase H (Dechloromonas aromatica (strain RCB)).